A 399-amino-acid polypeptide reads, in one-letter code: MPLQAIVSFLRLDIAAGVILVGAAVLALIAANSPAAALYEQVFQTPFVIGYGPWLLEKPLLLWINDGLMAVFFLLVGLEIKREVRGGELSTPRLAALPAVAAVGGMVVPALIYASLTWGDAFALRGWAIPAATDIAFALGILTLLGPRVPISLKIFLTALAIIDDLGAILIIAFFYTASLSPLALLLAAACLALLIGLNLSGQRRLWPYLLIGVVLWVCVLKSGVHATLAGVVLALTIPLGATDDESASADKPLERLEHGLHPWVTYAILPLFAFANAGVSLAGLPPSALLAPVPLGIVLGLFLGKQIGVFGFSWLAIRSGLAPMPQGARWRDLYGVALITGVGFTMSLFIGTLAFETSDPLAADFGTEVRLGVLSGSLLSGVIGYLVLRLSRRNPATE.

Helical transmembrane passes span 12 to 32 (LDIA…IAAN), 60 to 80 (LLLW…GLEI), 94 to 114 (LAAL…LIYA), 126 to 146 (GWAI…TLLG), 155 to 175 (IFLT…IAFF), 178 to 198 (ASLS…LIGL), 206 to 226 (LWPY…SGVH), 263 to 283 (PWVT…VSLA), 284 to 304 (GLPP…GLFL), 336 to 356 (GVAL…TLAF), and 372 to 392 (LGVL…LRLS).

This sequence belongs to the NhaA Na(+)/H(+) (TC 2.A.33) antiporter family.

The protein localises to the cell inner membrane. It carries out the reaction Na(+)(in) + 2 H(+)(out) = Na(+)(out) + 2 H(+)(in). In terms of biological role, na(+)/H(+) antiporter that extrudes sodium in exchange for external protons. In Rhodospirillum rubrum (strain ATCC 11170 / ATH 1.1.1 / DSM 467 / LMG 4362 / NCIMB 8255 / S1), this protein is Na(+)/H(+) antiporter NhaA.